Reading from the N-terminus, the 449-residue chain is Na(+)-translocating NADH-quinone reductase subunit A (449 aa).

Belongs to the NqrA family. In terms of assembly, composed of six subunits; NqrA, NqrB, NqrC, NqrD, NqrE and NqrF.

The enzyme catalyses a ubiquinone + n Na(+)(in) + NADH + H(+) = a ubiquinol + n Na(+)(out) + NAD(+). Functionally, NQR complex catalyzes the reduction of ubiquinone-1 to ubiquinol by two successive reactions, coupled with the transport of Na(+) ions from the cytoplasm to the periplasm. NqrA to NqrE are probably involved in the second step, the conversion of ubisemiquinone to ubiquinol. In Serratia proteamaculans (strain 568), this protein is Na(+)-translocating NADH-quinone reductase subunit A.